A 191-amino-acid chain; its full sequence is Peptidyl-tRNA hydrolase (191 aa).

A tRNA-binding site is contributed by tyrosine 15. Histidine 20 (proton acceptor) is an active-site residue. Residues phenylalanine 66, asparagine 68, and asparagine 114 each coordinate tRNA.

Belongs to the PTH family. Monomer.

It is found in the cytoplasm. The catalysed reaction is an N-acyl-L-alpha-aminoacyl-tRNA + H2O = an N-acyl-L-amino acid + a tRNA + H(+). Its function is as follows. Hydrolyzes ribosome-free peptidyl-tRNAs (with 1 or more amino acids incorporated), which drop off the ribosome during protein synthesis, or as a result of ribosome stalling. Catalyzes the release of premature peptidyl moieties from peptidyl-tRNA molecules trapped in stalled 50S ribosomal subunits, and thus maintains levels of free tRNAs and 50S ribosomes. This chain is Peptidyl-tRNA hydrolase, found in Streptococcus agalactiae serotype III (strain NEM316).